The following is a 601-amino-acid chain: Probable N-acetylgalactosaminyltransferase 7 (601 aa).

Residues 1–20 (MIIARKKLQLQRLWRQRGCR) are Cytoplasmic-facing. A helical; Signal-anchor for type II membrane protein membrane pass occupies residues 21–38 (VATYICLGVLVLFGFVYN). The Lumenal segment spans residues 39 to 601 (SKGNSMSSIK…FVWKEFYQSS (563 aa)). A disordered region spans residues 61 to 108 (DLTNKELPGGPDPNTIFRGSELGNYEPKEPEIPSNQPGEHGKPVPVTD). Residue Asn135 is glycosylated (N-linked (GlcNAc...) asparagine). Disulfide bonds link Cys146–Cys382, Cys373–Cys452, Cys490–Cys506, Cys529–Cys542, and Cys568–Cys583. The tract at residues 155 to 265 (LPTVSVVVVF…TNWLPPLLAP (111 aa)) is catalytic subdomain A. The substrate site is built by Asp196 and Arg226. Mn(2+)-binding residues include Asp249 and His251. The tract at residues 328-390 (PFRSPTHAGG…PCSHVGHVYR (63 aa)) is catalytic subdomain B. Trp359 is a binding site for substrate. His387 is a binding site for Mn(2+). Substrate is bound by residues Arg390 and Tyr395. The Ricin B-type lectin domain maps to 477–595 (DVWGEARNPA…DNERQKFVWK (119 aa)).

The protein belongs to the glycosyltransferase 2 family. GalNAc-T subfamily. Requires Mn(2+) as cofactor.

The protein resides in the golgi apparatus membrane. It functions in the pathway protein modification; protein glycosylation. Functionally, probable glycopeptide transferase involved in O-linked oligosaccharide biosynthesis. Glycopeptide transferases catalyze the transfer of an N-acetyl-D-galactosamine residue to an already glycosylated peptide. In contrast to other members of the family, it does not act as a peptide transferase that transfers GalNAc onto serine or threonine residue on peptides that have been tested. Some peptide transferase activity is however not excluded, considering that its appropriate peptide substrate may remain unidentified. The chain is Probable N-acetylgalactosaminyltransferase 7 (gly-7) from Caenorhabditis elegans.